Consider the following 97-residue polypeptide: MTEGADMARTSRPPVTIASDTLDRLERLAEGAMARNPDLADRLLTELGPRPVPAARADARGCSPASERGHLSRTRPPGASRTVVLVLPEDADIGRRA.

2 disordered regions span residues 1-20 and 52-97; these read MTEGADMARTSRPPVTIASD and VPAA…GRRA.

This is an uncharacterized protein from Paracoccus pantotrophus (Thiosphaera pantotropha).